A 121-amino-acid polypeptide reads, in one-letter code: Protein SNORC (121 aa).

Residues 1–24 form the signal peptide; it reads MASCLALRVALLLISGVLAPAVLT. The Extracellular segment spans residues 25-92; the sequence is AEGPQEPDPT…QDGGSLGPGA (68 aa). A disordered region spans residues 26–84; that stretch reads EGPQEPDPTLWNEPIELPSGEGPLESTSHNQEFAVSGPPFPTSAPAPEDSTPPARVDQD. The chain crosses the membrane as a helical span at residues 93 to 113; it reads IAAIVIAALLATCVVLALVVV. At 114–121 the chain is on the cytoplasmic side; sequence ALRKFSAS.

In terms of assembly, interacts (via the extracellular domain) with FGF2. As to expression, expressed only in cartilage, including nasal, knee epiphyseal and rib tissues. In proliferation and hypertrophic chondrocytes, detected intracellulary and in the pericellular extracellular matrix. In primary spongiosa, detected only in the extracellular matrix.

The protein localises to the membrane. It is found in the cytoplasm. Its subcellular location is the secreted. It localises to the extracellular space. The protein resides in the extracellular matrix. In terms of biological role, plays a role in the regulation of chondrocyte maturation and postnatal endochondral ossification. May inhibit cell growth stimulation induced by FGF2. The chain is Protein SNORC from Mus musculus (Mouse).